We begin with the raw amino-acid sequence, 625 residues long: Acetolactate synthase (625 aa).

The tract at residues 1-29 is disordered; sequence MSAPTKPHARPQGAGNSVPNTVKPATQFP. Over residues 14 to 29 the composition is skewed to polar residues; sequence AGNSVPNTVKPATQFP. Glutamate 92 contributes to the thiamine diphosphate binding site. FAD contacts are provided by residues arginine 194, 300-321, and 343-362; these read HGTV…LGTR and DIDP…IVGD. The interval 436-516 is thiamine pyrophosphate binding; sequence QHQMWAAQFI…IKVALINNGN (81 aa). Residues aspartate 487 and asparagine 514 each coordinate Mg(2+).

It belongs to the TPP enzyme family. Requires Mg(2+) as cofactor. Thiamine diphosphate serves as cofactor.

It catalyses the reaction 2 pyruvate + H(+) = (2S)-2-acetolactate + CO2. Its pathway is amino-acid biosynthesis; L-isoleucine biosynthesis; L-isoleucine from 2-oxobutanoate: step 1/4. It participates in amino-acid biosynthesis; L-valine biosynthesis; L-valine from pyruvate: step 1/4. This is Acetolactate synthase (ilvB) from Mycobacterium leprae (strain TN).